Consider the following 342-residue polypeptide: Ribosomal RNA small subunit methyltransferase H (342 aa).

S-adenosyl-L-methionine-binding positions include 36-38, Asp56, Phe82, Asp100, and Gln107; that span reads GGH. The tract at residues 309-342 is disordered; that stretch reads ENRESGMGKGHGAAASRFPTPDSRFPTSPNGDAP. Residues 333–342 are compositionally biased toward polar residues; it reads FPTSPNGDAP.

The protein belongs to the methyltransferase superfamily. RsmH family.

The protein resides in the cytoplasm. It catalyses the reaction cytidine(1402) in 16S rRNA + S-adenosyl-L-methionine = N(4)-methylcytidine(1402) in 16S rRNA + S-adenosyl-L-homocysteine + H(+). Functionally, specifically methylates the N4 position of cytidine in position 1402 (C1402) of 16S rRNA. The chain is Ribosomal RNA small subunit methyltransferase H from Xanthomonas campestris pv. campestris (strain B100).